Reading from the N-terminus, the 358-residue chain is DNA integrity scanning protein DisA (358 aa).

The DAC domain maps to 6–144 (RPTLREAVAR…RGERHVLTDS (139 aa)). ATP contacts are provided by residues Gly73, Leu91, and 104–108 (TRHRS).

It belongs to the DisA family. Homooctamer. Requires Mg(2+) as cofactor.

The catalysed reaction is 2 ATP = 3',3'-c-di-AMP + 2 diphosphate. Participates in a DNA-damage check-point. DisA forms globular foci that rapidly scan along the chromosomes searching for lesions. Functionally, also has diadenylate cyclase activity, catalyzing the condensation of 2 ATP molecules into cyclic di-AMP (c-di-AMP). c-di-AMP likely acts as a signaling molecule that may couple DNA integrity with a cellular process. In Mycobacterium bovis (strain ATCC BAA-935 / AF2122/97), this protein is DNA integrity scanning protein DisA.